An 813-amino-acid polypeptide reads, in one-letter code: DNA ligase (813 aa).

NAD(+) is bound by residues 41-45 (DAEYD), 90-91 (SI), and Glu-127. Catalysis depends on Lys-129, which acts as the N6-AMP-lysine intermediate. Arg-150, Glu-189, Lys-307, and Lys-331 together coordinate NAD(+). The Zn(2+) site is built by Cys-440, Cys-443, Cys-458, and Cys-464. The BRCT domain maps to 729–813 (AEEGALSGKT…LLQNPPGDSA (85 aa)).

This sequence belongs to the NAD-dependent DNA ligase family. LigA subfamily. Mg(2+) is required as a cofactor. It depends on Mn(2+) as a cofactor.

The catalysed reaction is NAD(+) + (deoxyribonucleotide)n-3'-hydroxyl + 5'-phospho-(deoxyribonucleotide)m = (deoxyribonucleotide)n+m + AMP + beta-nicotinamide D-nucleotide.. In terms of biological role, DNA ligase that catalyzes the formation of phosphodiester linkages between 5'-phosphoryl and 3'-hydroxyl groups in double-stranded DNA using NAD as a coenzyme and as the energy source for the reaction. It is essential for DNA replication and repair of damaged DNA. The polypeptide is DNA ligase (Ralstonia nicotianae (strain ATCC BAA-1114 / GMI1000) (Ralstonia solanacearum)).